The primary structure comprises 160 residues: Phosphopantetheine adenylyltransferase (160 aa).

Serine 11 is a binding site for substrate. ATP is bound by residues 11–12 (SF) and histidine 19. Residues lysine 43, leucine 75, and arginine 89 each coordinate substrate. ATP contacts are provided by residues 90–92 (GLR), glutamate 100, and 125–131 (YSFISSS).

This sequence belongs to the bacterial CoaD family. In terms of assembly, homohexamer. Requires Mg(2+) as cofactor.

The protein resides in the cytoplasm. It carries out the reaction (R)-4'-phosphopantetheine + ATP + H(+) = 3'-dephospho-CoA + diphosphate. Its pathway is cofactor biosynthesis; coenzyme A biosynthesis; CoA from (R)-pantothenate: step 4/5. Its function is as follows. Reversibly transfers an adenylyl group from ATP to 4'-phosphopantetheine, yielding dephospho-CoA (dPCoA) and pyrophosphate. This Staphylococcus aureus (strain Mu3 / ATCC 700698) protein is Phosphopantetheine adenylyltransferase.